The primary structure comprises 217 residues: Peptide methionine sulfoxide reductase MsrA (217 aa).

Residue cysteine 56 is part of the active site.

It belongs to the MsrA Met sulfoxide reductase family.

The enzyme catalyses L-methionyl-[protein] + [thioredoxin]-disulfide + H2O = L-methionyl-(S)-S-oxide-[protein] + [thioredoxin]-dithiol. The catalysed reaction is [thioredoxin]-disulfide + L-methionine + H2O = L-methionine (S)-S-oxide + [thioredoxin]-dithiol. Has an important function as a repair enzyme for proteins that have been inactivated by oxidation. Catalyzes the reversible oxidation-reduction of methionine sulfoxide in proteins to methionine. This Rippkaea orientalis (strain PCC 8801 / RF-1) (Cyanothece sp. (strain PCC 8801)) protein is Peptide methionine sulfoxide reductase MsrA.